Reading from the N-terminus, the 278-residue chain is 4-deoxy-L-threo-5-hexosulose-uronate ketol-isomerase (278 aa).

Zn(2+) contacts are provided by His196, His198, Glu203, and His245.

The protein belongs to the KduI family. It depends on Zn(2+) as a cofactor.

It catalyses the reaction 5-dehydro-4-deoxy-D-glucuronate = 3-deoxy-D-glycero-2,5-hexodiulosonate. It functions in the pathway glycan metabolism; pectin degradation; 2-dehydro-3-deoxy-D-gluconate from pectin: step 4/5. Catalyzes the isomerization of 5-dehydro-4-deoxy-D-glucuronate to 3-deoxy-D-glycero-2,5-hexodiulosonate. The sequence is that of 4-deoxy-L-threo-5-hexosulose-uronate ketol-isomerase from Shigella boydii serotype 4 (strain Sb227).